The following is a 78-amino-acid chain: NAD(P)H-quinone oxidoreductase subunit O (78 aa).

It belongs to the complex I NdhO subunit family. As to quaternary structure, NDH-1 can be composed of about 15 different subunits; different subcomplexes with different compositions have been identified which probably have different functions.

It is found in the cellular thylakoid membrane. The enzyme catalyses a plastoquinone + NADH + (n+1) H(+)(in) = a plastoquinol + NAD(+) + n H(+)(out). The catalysed reaction is a plastoquinone + NADPH + (n+1) H(+)(in) = a plastoquinol + NADP(+) + n H(+)(out). NDH-1 shuttles electrons from an unknown electron donor, via FMN and iron-sulfur (Fe-S) centers, to quinones in the respiratory and/or the photosynthetic chain. The immediate electron acceptor for the enzyme in this species is believed to be plastoquinone. Couples the redox reaction to proton translocation, and thus conserves the redox energy in a proton gradient. Cyanobacterial NDH-1 also plays a role in inorganic carbon-concentration. In Prochlorococcus marinus (strain AS9601), this protein is NAD(P)H-quinone oxidoreductase subunit O.